Consider the following 136-residue polypeptide: ATP synthase F(0) complex subunit C1, mitochondrial (136 aa).

The N-terminal 61 residues, 1–61 (MQTTGALLIS…REFQTSVVSR (61 aa)), are a transit peptide targeting the mitochondrion. A helical transmembrane segment spans residues 77 to 97 (VGVAGSGAGIGTVFGSLIIGY). The residue at position 104 (Lys104) is an N6,N6,N6-trimethyllysine. The chain crosses the membrane as a helical span at residues 112–132 (ILGFALSEAMGLFCLMVAFLI).

The protein belongs to the ATPase C chain family. In terms of assembly, homooctamer; the c-ring consists of eight c subunits forming a circle, and each subunit adopts a hairpin shape. Component of the ATP synthase complex composed at least of ATP5F1A/subunit alpha, ATP5F1B/subunit beta, ATP5MC1/subunit c (homooctomer), MT-ATP6/subunit a, MT-ATP8/subunit 8, ATP5ME/subunit e, ATP5MF/subunit f, ATP5MG/subunit g, ATP5MK/subunit k, ATP5MJ/subunit j, ATP5F1C/subunit gamma, ATP5F1D/subunit delta, ATP5F1E/subunit epsilon, ATP5PF/subunit F6, ATP5PB/subunit b, ATP5PD/subunit d, ATP5PO/subunit OSCP. ATP synthase complex consists of a soluble F(1) head domain (subunits alpha(3) and beta(3)) - the catalytic core - and a membrane F(0) domain - the membrane proton channel (subunits c, a, 8, e, f, g, k and j). These two domains are linked by a central stalk (subunits gamma, delta, and epsilon) rotating inside the F1 region and a stationary peripheral stalk (subunits F6, b, d, and OSCP). Interacts with TMEM70 (homooligomer form); this interaction facilitates the oligomer formation of subunit c/ATP5MC1 (c-ring) and the c-ring membrane insertion and also protects ATP5MC1 against intramitochondrial proteolysis. In terms of processing, trimethylated by ATPSCKMT at Lys-104. Methylation is required for proper incorporation of the C subunit into the ATP synthase complex and mitochondrial respiration.

Its subcellular location is the mitochondrion membrane. It catalyses the reaction H(+)(in) = H(+)(out). Functionally, subunit c, of the mitochondrial membrane ATP synthase complex (F(1)F(0) ATP synthase or Complex V) that produces ATP from ADP in the presence of a proton gradient across the membrane which is generated by electron transport complexes of the respiratory chain. ATP synthase complex consist of a soluble F(1) head domain - the catalytic core - and a membrane F(1) domain - the membrane proton channel. These two domains are linked by a central stalk rotating inside the F(1) region and a stationary peripheral stalk. During catalysis, ATP synthesis in the catalytic domain of F(1) is coupled via a rotary mechanism of the central stalk subunits to proton translocation. With the subunit a (MT-ATP6), forms the proton-conducting channel in the F(0) domain, that contains two crucial half-channels (inlet and outlet) that facilitate proton movement from the mitochondrial intermembrane space (IMS) into the matrix. Protons are taken up via the inlet half-channel and released through the outlet half-channel, following a Grotthuss mechanism. This is ATP synthase F(0) complex subunit C1, mitochondrial from Ovis aries (Sheep).